Consider the following 664-residue polypeptide: Methionine--tRNA ligase (664 aa).

The 'HIGH' region motif lies at 15-25; sequence YYPSGKAHIGH. The 'KMSKS' region motif lies at 310–314; the sequence is KMSKS. ATP is bound at residue lysine 313. One can recognise a tRNA-binding domain in the interval 563–664; it reads DFDKIDLRVA…SALPNGAKVK (102 aa).

Belongs to the class-I aminoacyl-tRNA synthetase family. MetG type 2B subfamily. In terms of assembly, homodimer.

It localises to the cytoplasm. It catalyses the reaction tRNA(Met) + L-methionine + ATP = L-methionyl-tRNA(Met) + AMP + diphosphate. Functionally, is required not only for elongation of protein synthesis but also for the initiation of all mRNA translation through initiator tRNA(fMet) aminoacylation. The polypeptide is Methionine--tRNA ligase (metG) (Listeria innocua serovar 6a (strain ATCC BAA-680 / CLIP 11262)).